Consider the following 88-residue polypeptide: MAHKKGTGSTRNGRDSNAKRLGVKAYGGETVTAGSILIRQRGTSVLPGINVGIGKDDTLFALTAGVVKFETIRRGLRNRKRINITAAV.

Residues 1–21 (MAHKKGTGSTRNGRDSNAKRL) are disordered.

Belongs to the bacterial ribosomal protein bL27 family.

In Parasynechococcus marenigrum (strain WH8102), this protein is Large ribosomal subunit protein bL27.